Here is a 467-residue protein sequence, read N- to C-terminus: Solute carrier family 52, riboflavin transporter, member 3 (467 aa).

Topologically, residues 1–2 (MA) are cytoplasmic. The helical transmembrane segment at 3-23 (FLIHLLVCTFGMGSWVAINGL) threads the bilayer. Residues 24–43 (WVELPLLVTELPEGWYLPSY) lie on the Extracellular side of the membrane. A helical membrane pass occupies residues 44–64 (LTVIIQLANVGPLLVTLLHHF). Over 65-71 (RPGCLSE) the chain is Cytoplasmic. The chain crosses the membrane as a helical span at residues 72-92 (VAVVFTVLGVGTIACTLFAFL). Topologically, residues 93 to 105 (WNVTSWVLGSRHS) are extracellular. A glycan (N-linked (GlcNAc...) asparagine) is linked at Asn-94. Residues 106–126 (IAFLVLTFFLALVDCTSSVTF) traverse the membrane as a helical segment. Topologically, residues 127–137 (LPFMSRLPTYY) are cytoplasmic. The chain crosses the membrane as a helical span at residues 138 to 158 (LTTFFVGEGLSGLLPALVALA). Over 159–220 (QGSGLTTCVN…SRYLPANFSP (62 aa)) the chain is Extracellular. Residue Asn-168 is glycosylated (N-linked (GlcNAc...) asparagine). A helical transmembrane segment spans residues 221 to 241 (LVFFLLLSFMMACCFISFFFL). Residues 242–294 (QRQPKRWEASIEDLLTSQVTLNSIRPQEGKDLGPPEESGKAQDPPEEKTAPQH) are Cytoplasmic-facing. Position 251 is a phosphoserine (Ser-251). Positions 266–288 (RPQEGKDLGPPEESGKAQDPPEE) are disordered. Residues 268-288 (QEGKDLGPPEESGKAQDPPEE) show a composition bias toward basic and acidic residues. Residues 295–315 (LAHLTFIYVLVAFVNALTNGV) form a helical membrane-spanning segment. At 316–333 (LPSVQTYSCLSYGPVAYH) the chain is on the extracellular side. A helical transmembrane segment spans residues 334–354 (LSATLSSMASPLTCFLSIFLP). Topologically, residues 355 to 359 (NRSLP) are cytoplasmic. Residues 360 to 380 (FLGVLAVLGTSFGAYNMAMAV) form a helical membrane-spanning segment. Residues 381 to 394 (MSPCPFMQGHWGGE) lie on the Extracellular side of the membrane. The chain crosses the membrane as a helical span at residues 395-415 (VLIVVSWVLFTGCLSYVKVML). At 416 to 425 (GVILRDHSRS) the chain is on the cytoplasmic side. The chain crosses the membrane as a helical span at residues 426 to 446 (ALLWCGAAVQLGSLLGAVVMF). Residues 447-467 (PLVNVLRLFSSADFCSLQCSA) lie on the Extracellular side of the membrane.

It belongs to the riboflavin transporter family.

The protein resides in the cell membrane. It catalyses the reaction riboflavin(in) = riboflavin(out). In terms of biological role, plasma membrane transporter mediating the uptake by cells of the water soluble vitamin B2/riboflavin that plays a key role in biochemical oxidation-reduction reactions of the carbohydrate, lipid, and amino acid metabolism. In Bos taurus (Bovine), this protein is Solute carrier family 52, riboflavin transporter, member 3 (SLC52A3).